The chain runs to 312 residues: Zinc finger CCCH domain-containing protein 25 (312 aa).

The region spanning 36-114 is the RRM domain; sequence AYVFVGGIPY…RIVRVDHVSK (79 aa). Residues 130-157 form a C3H1-type zinc finger; that stretch reads REARGVCYAFQKGECNRGASCRYSHDEQ. Residues 153-312 are disordered; it reads SHDEQRNANT…DSERYRKSRR (160 aa). 3 stretches are compositionally biased toward basic and acidic residues: residues 166–184, 197–210, and 219–312; these read SKEESKARWEHDRHHEPPM, RFPDRAKEENKSTG, and EAYK…KSRR.

The protein is Zinc finger CCCH domain-containing protein 25 of Oryza sativa subsp. japonica (Rice).